Here is a 343-residue protein sequence, read N- to C-terminus: Tetraacyldisaccharide 4'-kinase (343 aa).

Residue 58–65 coordinates ATP; that stretch reads VAGGAGKT.

This sequence belongs to the LpxK family.

The catalysed reaction is a lipid A disaccharide + ATP = a lipid IVA + ADP + H(+). It functions in the pathway glycolipid biosynthesis; lipid IV(A) biosynthesis; lipid IV(A) from (3R)-3-hydroxytetradecanoyl-[acyl-carrier-protein] and UDP-N-acetyl-alpha-D-glucosamine: step 6/6. Its function is as follows. Transfers the gamma-phosphate of ATP to the 4'-position of a tetraacyldisaccharide 1-phosphate intermediate (termed DS-1-P) to form tetraacyldisaccharide 1,4'-bis-phosphate (lipid IVA). This Polaromonas naphthalenivorans (strain CJ2) protein is Tetraacyldisaccharide 4'-kinase.